We begin with the raw amino-acid sequence, 410 residues long: Cathepsin D (410 aa).

Residues 1–20 (MKTPGVLLLILGLLASSSFA) form the signal peptide. The propeptide at 21–64 (IIRIPLRKFTSIRRTMTEVGGSVEDLILKGPITKYSMQSSPKTT) is activation peptide. In terms of domain architecture, Peptidase A1 spans 79 to 405 (YYGDIGIGTP…DRDNNRVGFA (327 aa)). Disulfide bonds link Cys91–Cys160 and Cys110–Cys117. Asp97 is an active-site residue. Residue Asn134 is glycosylated (N-linked (GlcNAc...) asparagine). Residue Asn261 is glycosylated (N-linked (GlcNAc...) (high mannose) asparagine). An intrachain disulfide couples Cys284 to Cys288. Asp293 is an active-site residue. The cysteines at positions 327 and 364 are disulfide-linked.

The protein belongs to the peptidase A1 family. In terms of assembly, consists of a light chain and a heavy chain. Interacts with ADAM30; this leads to activation of CTSD. Interacts with GRN; stabilizes CTSD; increases its proteolytic activity. Post-translationally, N- and O-glycosylated. Undergoes proteolytic cleavage and activation by ADAM30.

The protein resides in the lysosome. Its subcellular location is the melanosome. The protein localises to the secreted. It is found in the extracellular space. The catalysed reaction is Specificity similar to, but narrower than, that of pepsin A. Does not cleave the 4-Gln-|-His-5 bond in B chain of insulin.. In terms of biological role, acid protease active in intracellular protein breakdown. Plays a role in APP processing following cleavage and activation by ADAM30 which leads to APP degradation. This Mus musculus (Mouse) protein is Cathepsin D (Ctsd).